The primary structure comprises 515 residues: GMP synthase [glutamine-hydrolyzing] (515 aa).

The region spanning 6–198 (KVIILDFGSQ…VFKVAGLKAD (193 aa)) is the Glutamine amidotransferase type-1 domain. The active-site Nucleophile is the Cys83. Residues His172 and Glu174 contribute to the active site. The region spanning 199–390 (WTMSSFVENC…LGLPEFIIWR (192 aa)) is the GMPS ATP-PPase domain. 226 to 232 (SGGIDST) is a binding site for ATP.

As to quaternary structure, homodimer.

The catalysed reaction is XMP + L-glutamine + ATP + H2O = GMP + L-glutamate + AMP + diphosphate + 2 H(+). It functions in the pathway purine metabolism; GMP biosynthesis; GMP from XMP (L-Gln route): step 1/1. Its function is as follows. Catalyzes the synthesis of GMP from XMP. The sequence is that of GMP synthase [glutamine-hydrolyzing] from Maridesulfovibrio salexigens (strain ATCC 14822 / DSM 2638 / NCIMB 8403 / VKM B-1763) (Desulfovibrio salexigens).